Reading from the N-terminus, the 509-residue chain is ATP synthase subunit alpha (509 aa).

169-176 (GDRQTGKT) is a binding site for ATP.

This sequence belongs to the ATPase alpha/beta chains family. F-type ATPases have 2 components, CF(1) - the catalytic core - and CF(0) - the membrane proton channel. CF(1) has five subunits: alpha(3), beta(3), gamma(1), delta(1), epsilon(1). CF(0) has three main subunits: a(1), b(2) and c(9-12). The alpha and beta chains form an alternating ring which encloses part of the gamma chain. CF(1) is attached to CF(0) by a central stalk formed by the gamma and epsilon chains, while a peripheral stalk is formed by the delta and b chains.

The protein localises to the cell inner membrane. It carries out the reaction ATP + H2O + 4 H(+)(in) = ADP + phosphate + 5 H(+)(out). Its function is as follows. Produces ATP from ADP in the presence of a proton gradient across the membrane. The alpha chain is a regulatory subunit. The protein is ATP synthase subunit alpha of Brucella anthropi (strain ATCC 49188 / DSM 6882 / CCUG 24695 / JCM 21032 / LMG 3331 / NBRC 15819 / NCTC 12168 / Alc 37) (Ochrobactrum anthropi).